The chain runs to 214 residues: Tungstate uptake system ATP-binding protein TupC (214 aa).

Residues 3–214 (ITVSNLKKSY…GRVGEADGFF (212 aa)) form the ABC transporter domain. Position 35-42 (35-42 (GPNGAGKT)) interacts with ATP.

The protein belongs to the ABC transporter superfamily. As to quaternary structure, the complex is composed of two ATP-binding proteins (TupC), two transmembrane proteins (TupB) and a solute-binding protein (TupA).

It carries out the reaction tungstate(in) + ATP + H2O = tungstate(out) + ADP + phosphate + H(+). Part of an ABC transporter complex involved in tungstate uptake. Probably responsible for energy coupling to the transport system. This is Tungstate uptake system ATP-binding protein TupC from Peptoclostridium acidaminophilum (Eubacterium acidaminophilum).